The following is a 175-amino-acid chain: Peptide deformylase (175 aa).

2 residues coordinate Fe cation: C98 and H140. The active site involves E141. Residue H144 participates in Fe cation binding.

The protein belongs to the polypeptide deformylase family. Requires Fe(2+) as cofactor.

It catalyses the reaction N-terminal N-formyl-L-methionyl-[peptide] + H2O = N-terminal L-methionyl-[peptide] + formate. Removes the formyl group from the N-terminal Met of newly synthesized proteins. Requires at least a dipeptide for an efficient rate of reaction. N-terminal L-methionine is a prerequisite for activity but the enzyme has broad specificity at other positions. The chain is Peptide deformylase from Bradyrhizobium sp. (strain ORS 278).